The chain runs to 118 residues: Ribulose bisphosphate carboxylase small subunit (118 aa).

Belongs to the RuBisCO small chain family. Heterohexadecamer of 8 large and 8 small subunits.

RuBisCO catalyzes two reactions: the carboxylation of D-ribulose 1,5-bisphosphate, the primary event in carbon dioxide fixation, as well as the oxidative fragmentation of the pentose substrate. Both reactions occur simultaneously and in competition at the same active site. Although the small subunit is not catalytic it is essential for maximal activity. The sequence is that of Ribulose bisphosphate carboxylase small subunit from Rhodobacter capsulatus (Rhodopseudomonas capsulata).